A 390-amino-acid polypeptide reads, in one-letter code: Protein NDRG4-A (390 aa).

Residues 356–390 (LTSASSVDGSRPRPCTQSESSDGIGQINHTMEVSC) are disordered. Residues 370 to 390 (CTQSESSDGIGQINHTMEVSC) are compositionally biased toward polar residues.

It belongs to the NDRG family.

Its subcellular location is the cytoplasm. It localises to the cytosol. In terms of biological role, contributes to the maintenance of intracerebral BDNF levels within the normal range. May enhance growth factor-induced ERK1 and ERK2 phosphorylation. May attenuate growth factor-promoted ELK1 phosphorylation in a microtubule-dependent manner. This is Protein NDRG4-A (ndrg4-a) from Xenopus laevis (African clawed frog).